We begin with the raw amino-acid sequence, 415 residues long: Tyrosine--tRNA ligase (415 aa).

The 'HIGH' region signature appears at 54–63; the sequence is PTGSNIHLGH. Positions 248-252 match the 'KMSKS' region motif; sequence KMSKS. Lys251 serves as a coordination point for ATP. The S4 RNA-binding domain maps to 351–414; sequence AKAFYLFSAV…LGKKTFRRLV (64 aa).

The protein belongs to the class-I aminoacyl-tRNA synthetase family. TyrS type 2 subfamily. As to quaternary structure, homodimer.

The protein localises to the cytoplasm. The catalysed reaction is tRNA(Tyr) + L-tyrosine + ATP = L-tyrosyl-tRNA(Tyr) + AMP + diphosphate + H(+). Catalyzes the attachment of tyrosine to tRNA(Tyr) in a two-step reaction: tyrosine is first activated by ATP to form Tyr-AMP and then transferred to the acceptor end of tRNA(Tyr). This chain is Tyrosine--tRNA ligase, found in Synechococcus sp. (strain CC9605).